The following is a 982-amino-acid chain: Chromosome partition protein Smc (982 aa).

ATP is bound at residue 33-40; sequence PNGSGKSN. Coiled coils occupy residues 171 to 235 and 263 to 377; these read RYTK…LVAD and QLQL…NLNQ. Residues 416 to 535 enclose the SMC hinge domain; it reads TGLLNTLNTF…ASDLQAALKL (120 aa). Coiled coils occupy residues 568–627, 669–713, and 753–818; these read LSLY…ERVN, AERD…RSQL, and IKLS…EIDE.

Belongs to the SMC family. In terms of assembly, homodimer.

The protein resides in the cytoplasm. In terms of biological role, required for chromosome condensation and partitioning. The chain is Chromosome partition protein Smc from Mycoplasma pneumoniae (strain ATCC 29342 / M129 / Subtype 1) (Mycoplasmoides pneumoniae).